The sequence spans 366 residues: 3-beta-hydroxysteroid dehydrogenase (366 aa).

Tyr154 acts as the Proton donor in catalysis.

It belongs to the 3-beta-HSD family.

The catalysed reaction is testosterone + NAD(+) = androst-4-ene-3,17-dione + NADH + H(+). It carries out the reaction testosterone + NADP(+) = androst-4-ene-3,17-dione + NADPH + H(+). In terms of biological role, catalyzes the degradation of testosterone into androstenedione. This is 3-beta-hydroxysteroid dehydrogenase from Mycolicibacterium neoaurum (Mycobacterium neoaurum).